A 224-amino-acid chain; its full sequence is Ras-related protein RABA4b (224 aa).

A2 is subject to N-acetylalanine. 24-31 (GDSAVGKS) contacts GTP. Positions 46 to 54 (SKATIGVEF) match the Effector region motif. GTP contacts are provided by residues 72–76 (DTAGQ), 130–133 (NKSD), and 160–161 (SA). 2 S-geranylgeranyl cysteine lipidation sites follow: C220 and C221.

This sequence belongs to the small GTPase superfamily. Rab family. As to quaternary structure, interacts with TCTP1. In terms of tissue distribution, expressed in roots, stems, leaves and flowers. Expressed in tips of growing root hair cells.

It is found in the early endosome membrane. Its subcellular location is the golgi apparatus. The protein resides in the trans-Golgi network membrane. Functionally, regulator of membrane trafficking. May be required for secretion of cell wall components in cells. This is Ras-related protein RABA4b from Arabidopsis thaliana (Mouse-ear cress).